The chain runs to 363 residues: MKDNFSFAATSRNITSSRPFDNLNATGTNESAFNCSHKPSDKHLEAIPVLYYMIFVIGFAVNIVVVSLFCCQKGPKKVSSIYIFNLALADLLLLATLPLWATYYSYRYDWLFGPVMCKVFGSFLTLNMFASIFFITCMSVDRYQSVIYPFLSQRRNPWQASYVVPLVWCMACLSSLPTFYFRDVRTIEYLGVNACIMAFPPEKYAQWSAGIALMKNILGFIIPLIFIATCYFGIRKHLLKTNSYGKNRITRDQVLKMAAAVVLAFIICWLPFHVLTFLDALTWMGIINSCEVIAVIDLALPFAILLGFTNSCVNPFLYCFVGNRFQQKLRSVFRVPITWLQGKRETMSCRKGSSLREMDTFVS.

Over 1–45 the chain is Extracellular; it reads MKDNFSFAATSRNITSSRPFDNLNATGTNESAFNCSHKPSDKHLE. N4, N13, N24, N29, and N34 each carry an N-linked (GlcNAc...) asparagine glycan. 2 disulfide bridges follow: C35–C290 and C117–C195. Residues 46–70 form a helical membrane-spanning segment; it reads AIPVLYYMIFVIGFAVNIVVVSLFC. The Cytoplasmic segment spans residues 71-80; that stretch reads CQKGPKKVSS. A helical membrane pass occupies residues 81–104; that stretch reads IYIFNLALADLLLLATLPLWATYY. Residues Y103 and Y104 each contribute to the angiotensin II site. Topologically, residues 105 to 114 are extracellular; the sequence is SYRYDWLFGP. Residues 115–140 form a helical membrane-spanning segment; it reads VMCKVFGSFLTLNMFASIFFITCMSV. The Cytoplasmic portion of the chain corresponds to 141-159; the sequence is DRYQSVIYPFLSQRRNPWQ. Residues 160-181 form a helical membrane-spanning segment; sequence ASYVVPLVWCMACLSSLPTFYF. The angiotensin II site is built by R182, Y204, and K215. The Extracellular segment spans residues 182–206; sequence RDVRTIEYLGVNACIMAFPPEKYAQ. The helical transmembrane segment at 207 to 232 threads the bilayer; it reads WSAGIALMKNILGFIIPLIFIATCYF. Residues 233–257 are Cytoplasmic-facing; that stretch reads GIRKHLLKTNSYGKNRITRDQVLKM. A helical membrane pass occupies residues 258–281; the sequence is AAAVVLAFIICWLPFHVLTFLDAL. D279 is a binding site for angiotensin II. Topologically, residues 282 to 294 are extracellular; that stretch reads TWMGIINSCEVIA. A helical transmembrane segment spans residues 295–320; sequence VIDLALPFAILLGFTNSCVNPFLYCF. Angiotensin II is bound at residue D297. Over 321–363 the chain is Cytoplasmic; that stretch reads VGNRFQQKLRSVFRVPITWLQGKRETMSCRKGSSLREMDTFVS. A helix VIII region spans residues 324-333; sequence RFQQKLRSVF. S354 carries the phosphoserine; by PKC modification.

This sequence belongs to the G-protein coupled receptor 1 family. In terms of assembly, interacts with MTUS1. In terms of tissue distribution, expressed at highest levels in adrenal gland and uterus.

The protein resides in the cell membrane. Receptor for angiotensin II, a vasoconstricting peptide. Signals primarily via a non-canonical G-protein- and beta-arrestin independent pathways. Cooperates with MTUS1 to inhibit ERK2 activation and cell proliferation. In Mus musculus (Mouse), this protein is Type-2 angiotensin II receptor.